A 202-amino-acid chain; its full sequence is 3-isopropylmalate dehydratase small subunit (202 aa).

The protein belongs to the LeuD family. LeuD type 1 subfamily. Heterodimer of LeuC and LeuD.

It carries out the reaction (2R,3S)-3-isopropylmalate = (2S)-2-isopropylmalate. It participates in amino-acid biosynthesis; L-leucine biosynthesis; L-leucine from 3-methyl-2-oxobutanoate: step 2/4. In terms of biological role, catalyzes the isomerization between 2-isopropylmalate and 3-isopropylmalate, via the formation of 2-isopropylmaleate. In Nocardioides sp. (strain ATCC BAA-499 / JS614), this protein is 3-isopropylmalate dehydratase small subunit.